The following is a 294-amino-acid chain: 4-hydroxy-tetrahydrodipicolinate synthase (294 aa).

T47 contacts pyruvate. Y136 acts as the Proton donor/acceptor in catalysis. K164 (schiff-base intermediate with substrate) is an active-site residue. V206 serves as a coordination point for pyruvate.

It belongs to the DapA family. In terms of assembly, homotetramer; dimer of dimers.

It localises to the cytoplasm. It catalyses the reaction L-aspartate 4-semialdehyde + pyruvate = (2S,4S)-4-hydroxy-2,3,4,5-tetrahydrodipicolinate + H2O + H(+). It participates in amino-acid biosynthesis; L-lysine biosynthesis via DAP pathway; (S)-tetrahydrodipicolinate from L-aspartate: step 3/4. Its function is as follows. Catalyzes the condensation of (S)-aspartate-beta-semialdehyde [(S)-ASA] and pyruvate to 4-hydroxy-tetrahydrodipicolinate (HTPA). In Nostoc sp. (strain PCC 7120 / SAG 25.82 / UTEX 2576), this protein is 4-hydroxy-tetrahydrodipicolinate synthase.